The sequence spans 223 residues: UPF0319 protein VPA1584 (223 aa).

Residues 1 to 21 (MKLIKPLTCALALAMSGMAFA) form the signal peptide.

Belongs to the UPF0319 family.

The sequence is that of UPF0319 protein VPA1584 from Vibrio parahaemolyticus serotype O3:K6 (strain RIMD 2210633).